The sequence spans 355 residues: Histidinol-phosphate aminotransferase 2 (355 aa).

N6-(pyridoxal phosphate)lysine is present on Lys-213.

It belongs to the class-II pyridoxal-phosphate-dependent aminotransferase family. Histidinol-phosphate aminotransferase subfamily. As to quaternary structure, homodimer. It depends on pyridoxal 5'-phosphate as a cofactor.

It catalyses the reaction L-histidinol phosphate + 2-oxoglutarate = 3-(imidazol-4-yl)-2-oxopropyl phosphate + L-glutamate. The protein operates within amino-acid biosynthesis; L-histidine biosynthesis; L-histidine from 5-phospho-alpha-D-ribose 1-diphosphate: step 7/9. The chain is Histidinol-phosphate aminotransferase 2 from Burkholderia lata (strain ATCC 17760 / DSM 23089 / LMG 22485 / NCIMB 9086 / R18194 / 383).